We begin with the raw amino-acid sequence, 504 residues long: Glycerol kinase (504 aa).

Thr-16 lines the ADP pocket. 2 residues coordinate ATP: Thr-16 and Thr-17. Position 16 (Thr-16) interacts with sn-glycerol 3-phosphate. Arg-20 contacts ADP. Residues Arg-86, Glu-87, Tyr-138, and Asp-247 each contribute to the sn-glycerol 3-phosphate site. Glycerol-binding residues include Arg-86, Glu-87, Tyr-138, Asp-247, and Gln-248. The ADP site is built by Thr-269 and Gly-316. ATP contacts are provided by Thr-269, Gly-316, Gln-320, and Gly-417. ADP is bound by residues Gly-417 and Asn-421.

It belongs to the FGGY kinase family.

The enzyme catalyses glycerol + ATP = sn-glycerol 3-phosphate + ADP + H(+). The protein operates within polyol metabolism; glycerol degradation via glycerol kinase pathway; sn-glycerol 3-phosphate from glycerol: step 1/1. Inhibited by fructose 1,6-bisphosphate (FBP). Functionally, key enzyme in the regulation of glycerol uptake and metabolism. Catalyzes the phosphorylation of glycerol to yield sn-glycerol 3-phosphate. The protein is Glycerol kinase of Trichodesmium erythraeum (strain IMS101).